A 334-amino-acid polypeptide reads, in one-letter code: Beta-hexosaminidase (334 aa).

Substrate contacts are provided by residues Asp62, Arg70, Arg130, and 160–161 (KH). His173 serves as the catalytic Proton donor/acceptor. The active-site Nucleophile is Asp243.

This sequence belongs to the glycosyl hydrolase 3 family. NagZ subfamily.

Its subcellular location is the cytoplasm. The enzyme catalyses Hydrolysis of terminal non-reducing N-acetyl-D-hexosamine residues in N-acetyl-beta-D-hexosaminides.. Its pathway is cell wall biogenesis; peptidoglycan recycling. In terms of biological role, plays a role in peptidoglycan recycling by cleaving the terminal beta-1,4-linked N-acetylglucosamine (GlcNAc) from peptide-linked peptidoglycan fragments, giving rise to free GlcNAc, anhydro-N-acetylmuramic acid and anhydro-N-acetylmuramic acid-linked peptides. In Photobacterium profundum (strain SS9), this protein is Beta-hexosaminidase.